We begin with the raw amino-acid sequence, 515 residues long: Galactose/methyl galactoside import ATP-binding protein MglA (515 aa).

2 ABC transporter domains span residues 8 to 243 (LEMR…VGRE) and 254 to 499 (IPKE…AKYL). Position 40-47 (40-47 (GENGAGKS)) interacts with ATP.

This sequence belongs to the ABC transporter superfamily. Galactose/methyl galactoside importer (TC 3.A.1.2.3) family. As to quaternary structure, the complex is composed of one ATP-binding protein (MglA), two transmembrane proteins (MglC) and a solute-binding protein (MglB).

Its subcellular location is the cell membrane. The catalysed reaction is D-galactose(out) + ATP + H2O = D-galactose(in) + ADP + phosphate + H(+). The enzyme catalyses methyl beta-D-galactoside(out) + ATP + H2O = methyl beta-D-galactoside(in) + ADP + phosphate + H(+). In terms of biological role, part of the ABC transporter complex MglABC involved in galactose/methyl galactoside import. Responsible for energy coupling to the transport system. The sequence is that of Galactose/methyl galactoside import ATP-binding protein MglA from Clostridium perfringens (strain 13 / Type A).